Here is a 123-residue protein sequence, read N- to C-terminus: Small ribosomal subunit protein uS13 (123 aa).

The interval 94–123 (AGLPVRGQRTKTNARTRKGPKKTVGVQRKK) is disordered. Over residues 101 to 123 (QRTKTNARTRKGPKKTVGVQRKK) the composition is skewed to basic residues.

Belongs to the universal ribosomal protein uS13 family. Part of the 30S ribosomal subunit. Forms a loose heterodimer with protein S19. Forms two bridges to the 50S subunit in the 70S ribosome.

In terms of biological role, located at the top of the head of the 30S subunit, it contacts several helices of the 16S rRNA. In the 70S ribosome it contacts the 23S rRNA (bridge B1a) and protein L5 of the 50S subunit (bridge B1b), connecting the 2 subunits; these bridges are implicated in subunit movement. Contacts the tRNAs in the A and P-sites. In Acetivibrio thermocellus (strain ATCC 27405 / DSM 1237 / JCM 9322 / NBRC 103400 / NCIMB 10682 / NRRL B-4536 / VPI 7372) (Clostridium thermocellum), this protein is Small ribosomal subunit protein uS13.